The chain runs to 501 residues: Splicing factor 3A subunit 3 (501 aa).

An N-acetylmethionine modification is found at Met1. Phosphoserine occurs at positions 54 and 121. The short motif at 175 to 179 (KERKN) is the Nuclear localization signal element. Ser295 and Ser299 each carry phosphoserine. Basic and acidic residues predominate over residues 343-354 (ENVQRKQARTGE). Residues 343 to 374 (ENVQRKQARTGEEREEEEEEQISESESEDEEN) form a disordered region. The span at 355 to 374 (EREEEEEEQISESESEDEEN) shows a compositional bias: acidic residues. Phosphoserine is present on residues Ser365, Ser367, and Ser369. The segment at 406-437 (YNCEICGNYTYRGPKAFQRHFAEWRHAHGMRC) adopts a Matrin-type zinc-finger fold. The residue at position 475 (Thr475) is a Phosphothreonine.

This sequence belongs to the SF3A3 family. In terms of assembly, component of the 17S U2 SnRNP complex, a ribonucleoprotein complex that contains small nuclear RNA (snRNA) U2 and a number of specific proteins. Part of the SF3A subcomplex of the 17S U2 SnRNP complex which is composed of three subunits; SF3A3/SAP61, SF3A2/SAP62 and SF3A1/SAP114. SF3A associates with the splicing factor SF3B and a 12S RNA unit to form the mature 17S U2 small nuclear ribonucleoprotein complex (17S U2 snRNP). Identified in the spliceosome 'E' complex, a precursor of the spliceosome 'A' complex. Identified in the spliceosome 'A' and 'B' complexes. Identified in the spliceosome 'C' complex. Ubiquitous.

The protein localises to the nucleus speckle. Its subcellular location is the nucleus. Component of the 17S U2 SnRNP complex of the spliceosome, a large ribonucleoprotein complex that removes introns from transcribed pre-mRNAs. The 17S U2 SnRNP complex (1) directly participates in early spliceosome assembly and (2) mediates recognition of the intron branch site during pre-mRNA splicing by promoting the selection of the pre-mRNA branch-site adenosine, the nucleophile for the first step of splicing. Within the 17S U2 SnRNP complex, SF3A3 is part of the SF3A subcomplex that contributes to the assembly of the 17S U2 snRNP, and the subsequent assembly of the pre-spliceosome 'E' complex and the pre-catalytic spliceosome 'A' complex. Involved in pre-mRNA splicing as a component of pre-catalytic spliceosome 'B' complexes. The chain is Splicing factor 3A subunit 3 (SF3A3) from Homo sapiens (Human).